Here is a 320-residue protein sequence, read N- to C-terminus: L-lactate dehydrogenase 1 (320 aa).

NAD(+)-binding positions include Val-18, Asp-39, Arg-44, Tyr-69, and 83–84; that span reads GA. The substrate site is built by Gln-86 and Arg-92. Residues Ser-105, 122–124, and Ser-147 each bind NAD(+); that span reads AAN. 124-127 is a binding site for substrate; the sequence is NPVD. 152-155 is a binding site for substrate; it reads DSSR. The active-site Proton acceptor is the His-179. A Phosphotyrosine modification is found at Tyr-223. Thr-232 is a substrate binding site.

This sequence belongs to the LDH/MDH superfamily. LDH family. As to quaternary structure, homotetramer.

The protein resides in the cytoplasm. It carries out the reaction (S)-lactate + NAD(+) = pyruvate + NADH + H(+). Its pathway is fermentation; pyruvate fermentation to lactate; (S)-lactate from pyruvate: step 1/1. Functionally, catalyzes the conversion of lactate to pyruvate. This Lactiplantibacillus plantarum (strain ATCC BAA-793 / NCIMB 8826 / WCFS1) (Lactobacillus plantarum) protein is L-lactate dehydrogenase 1.